We begin with the raw amino-acid sequence, 235 residues long: uncharacterized protein (235 aa).

2 disordered regions span residues 60 to 96 and 192 to 235; these read SSNRSMSIDSLTGKKRPHDISFQNMNSSMPSSTQKKT and LNTS…YDSF. Over residues 80-93 the composition is skewed to polar residues; sequence SFQNMNSSMPSSTQ. The segment covering 197 to 214 has biased composition (acidic residues); the sequence is SEDDTESIVETDYSEEEK.

It belongs to the asfivirus DP238L family.

This is an uncharacterized protein from Ornithodoros (relapsing fever ticks).